Reading from the N-terminus, the 490-residue chain is Ketol-acid reductoisomerase (NADP(+)) (490 aa).

Residues 16–207 (INKCRFMKKE…GGHRAGVLES (192 aa)) enclose the KARI N-terminal Rossmann domain. NADP(+) contacts are provided by residues 44–47 (CGAQ), Lys67, Ser77, and 107–109 (DKQ). The active site involves His131. Gly157 contributes to the NADP(+) binding site. KARI C-terminal knotted domains are found at residues 208-343 (SFIA…TAPV) and 344-483 (YNEK…MKKM). Mg(2+) is bound by residues Asp216, Glu220, Glu388, and Glu392. Ser413 lines the substrate pocket.

This sequence belongs to the ketol-acid reductoisomerase family. The cofactor is Mg(2+).

The catalysed reaction is (2R)-2,3-dihydroxy-3-methylbutanoate + NADP(+) = (2S)-2-acetolactate + NADPH + H(+). It catalyses the reaction (2R,3R)-2,3-dihydroxy-3-methylpentanoate + NADP(+) = (S)-2-ethyl-2-hydroxy-3-oxobutanoate + NADPH + H(+). It functions in the pathway amino-acid biosynthesis; L-isoleucine biosynthesis; L-isoleucine from 2-oxobutanoate: step 2/4. The protein operates within amino-acid biosynthesis; L-valine biosynthesis; L-valine from pyruvate: step 2/4. Involved in the biosynthesis of branched-chain amino acids (BCAA). Catalyzes an alkyl-migration followed by a ketol-acid reduction of (S)-2-acetolactate (S2AL) to yield (R)-2,3-dihydroxy-isovalerate. In the isomerase reaction, S2AL is rearranged via a Mg-dependent methyl migration to produce 3-hydroxy-3-methyl-2-ketobutyrate (HMKB). In the reductase reaction, this 2-ketoacid undergoes a metal-dependent reduction by NADPH to yield (R)-2,3-dihydroxy-isovalerate. The polypeptide is Ketol-acid reductoisomerase (NADP(+)) (Buchnera aphidicola subsp. Acyrthosiphon pisum (strain 5A)).